The primary structure comprises 515 residues: uncharacterized protein (515 aa).

Disordered stretches follow at residues Asp-117–Gln-188, Arg-362–Met-453, and Gly-496–Asn-515. Basic and acidic residues-rich tracts occupy residues Lys-370–Glu-380, Pro-388–Glu-402, and Pro-428–Pro-438. Residues Ala-502–Asn-515 are compositionally biased toward acidic residues.

This is an uncharacterized protein from Ostreid herpesvirus 1 (isolate France) (OsHV-1).